The sequence spans 296 residues: Light-independent protochlorophyllide reductase iron-sulfur ATP-binding protein (296 aa).

Residues 39–44 (GIGKST) and Lys-68 each bind ATP. Ser-43 is a binding site for Mg(2+). [4Fe-4S] cluster-binding residues include Cys-124 and Cys-158. Residue 209 to 210 (NR) participates in ATP binding.

It belongs to the NifH/BchL/ChlL family. In terms of assembly, homodimer. Protochlorophyllide reductase is composed of three subunits; ChlL, ChlN and ChlB. [4Fe-4S] cluster serves as cofactor.

The catalysed reaction is chlorophyllide a + oxidized 2[4Fe-4S]-[ferredoxin] + 2 ADP + 2 phosphate = protochlorophyllide a + reduced 2[4Fe-4S]-[ferredoxin] + 2 ATP + 2 H2O. It participates in porphyrin-containing compound metabolism; chlorophyll biosynthesis (light-independent). Functionally, component of the dark-operative protochlorophyllide reductase (DPOR) that uses Mg-ATP and reduced ferredoxin to reduce ring D of protochlorophyllide (Pchlide) to form chlorophyllide a (Chlide). This reaction is light-independent. The L component serves as a unique electron donor to the NB-component of the complex, and binds Mg-ATP. The sequence is that of Light-independent protochlorophyllide reductase iron-sulfur ATP-binding protein from Prochlorococcus marinus (strain SARG / CCMP1375 / SS120).